The following is a 741-amino-acid chain: Zinc finger and BTB domain-containing protein 20 (741 aa).

Over residues 1-17 (MLERKKPKTAENQKASE) the composition is skewed to basic and acidic residues. Residues 1–28 (MLERKKPKTAENQKASEENEITQPGGSS) are disordered. Positions 104–167 (CDVTVRIHGS…MYSGVLRVSQ (64 aa)) constitute a BTB domain. The segment at 203 to 235 (GIQDSGQDTPRGTPESGTSGQSSDTESGYLQSH) is disordered. A compositionally biased stretch (polar residues) spans 206 to 235 (DSGQDTPRGTPESGTSGQSSDTESGYLQSH). Position 211 is a phosphothreonine (T211). K330 participates in a covalent cross-link: Glycyl lysine isopeptide (Lys-Gly) (interchain with G-Cter in SUMO1); alternate. A Glycyl lysine isopeptide (Lys-Gly) (interchain with G-Cter in SUMO2); alternate cross-link involves residue K330. The segment at 350–440 (RNESEECTED…SSPERSNESE (91 aa)) is disordered. S353 carries the post-translational modification Phosphoserine. Acidic residues predominate over residues 354–367 (EECTEDTDQAEGTE). T357 bears the Phosphothreonine mark. Residue K371 forms a Glycyl lysine isopeptide (Lys-Gly) (interchain with G-Cter in SUMO2) linkage. Residues 404–423 (AEPAQPEQAAEAPAESSAQP) are compositionally biased toward low complexity. 4 C2H2-type zinc fingers span residues 578–600 (YECTLCNKTFTAKQNYVKHMFVH), 606–628 (HQCSICWRSFSLKDYLIKHMVTH), 634–656 (YQCSICNKRFTQKSSLNVHMRLH), and 662–684 (YECYICKKKFSHKTLLERHVALH). T690 and T695 each carry phosphothreonine. The segment at 715-737 (YVCSVCPAKFDQIEQFNDHMRMH) adopts a C2H2-type 5 zinc-finger fold. K723 participates in a covalent cross-link: Glycyl lysine isopeptide (Lys-Gly) (interchain with G-Cter in SUMO2).

In terms of assembly, can homodimerize. Binds to DNA. Post-translationally, sumoylated with SUMO1. As to expression, specifically expressed in early hippocampal neurons, cerebellar granule cells and gliogenic progenitors as well as in differentiated glia. Expressed in adult and aged myogenic satellite cells.

Its subcellular location is the nucleus. May be a transcription factor that may be involved in hematopoiesis, oncogenesis, and immune responses. Plays a role in postnatal myogenesis, may be involved in the regulation of satellite cells self-renewal. In Mus musculus (Mouse), this protein is Zinc finger and BTB domain-containing protein 20 (Zbtb20).